Here is a 434-residue protein sequence, read N- to C-terminus: Alpha-enolase (434 aa).

Residue Ser40 coordinates Mg(2+). Substrate is bound by residues His158 and Glu167. The Proton donor role is filled by Glu210. Residues Asp245, Glu293, and Asp318 each coordinate Mg(2+). Residues Glu293 and Asp318 each coordinate substrate. Lys343 (proton acceptor) is an active-site residue. Substrate is bound by residues 370-373 (SHRS) and Lys394.

This sequence belongs to the enolase family. As to quaternary structure, homodimer. Requires Mg(2+) as cofactor.

It is found in the cytoplasm. The enzyme catalyses (2R)-2-phosphoglycerate = phosphoenolpyruvate + H2O. Its pathway is carbohydrate degradation; glycolysis; pyruvate from D-glyceraldehyde 3-phosphate: step 4/5. This Python regius (Ball python) protein is Alpha-enolase.